The primary structure comprises 277 residues: Zinc transporter ZupT (277 aa).

8 helical membrane passes run 7 to 27 (VLLA…GSAI), 38 to 58 (FLAV…FVEI), 73 to 93 (VLAS…IAVI), 133 to 155 (AGVL…AFSA), 165 to 187 (AIAV…PIYY), 196 to 216 (FLYS…GYVV), 220 to 240 (FFTP…MVYI), and 257 to 277 (LCIL…LLFL). Fe(2+)-binding residues include N145 and E148. The Zn(2+) site is built by E148 and H173. Fe(2+) is bound by residues N174, E177, and E206. E177 contacts Zn(2+).

It belongs to the ZIP transporter (TC 2.A.5) family. ZupT subfamily.

The protein localises to the cell inner membrane. It catalyses the reaction Zn(2+)(in) = Zn(2+)(out). Functionally, mediates zinc uptake. May also transport other divalent cations. This Nitratidesulfovibrio vulgaris (strain ATCC 29579 / DSM 644 / CCUG 34227 / NCIMB 8303 / VKM B-1760 / Hildenborough) (Desulfovibrio vulgaris) protein is Zinc transporter ZupT.